A 612-amino-acid polypeptide reads, in one-letter code: UvrABC system protein C (612 aa).

The GIY-YIG domain occupies 20-98; it reads THSGVYRMLD…IKQHRPKYNI (79 aa). The UVR domain maps to 208–243; that stretch reads SSVLEEISAKMYQASEDMEYEKAQVYRDQLVVLRKL.

It belongs to the UvrC family. In terms of assembly, interacts with UvrB in an incision complex.

Its subcellular location is the cytoplasm. Functionally, the UvrABC repair system catalyzes the recognition and processing of DNA lesions. UvrC both incises the 5' and 3' sides of the lesion. The N-terminal half is responsible for the 3' incision and the C-terminal half is responsible for the 5' incision. This Francisella tularensis subsp. holarctica (strain FTNF002-00 / FTA) protein is UvrABC system protein C.